The following is a 585-amino-acid chain: Nitrogen permease regulator 3-like protein (585 aa).

A disordered region spans residues 117-157 (GEWAKRRKPRTTVESNASSSHLVSKPESSHPSTGSFEVKSS). The span at 128–138 (TVESNASSSHL) shows a compositional bias: polar residues. The segment covering 148-157 (STGSFEVKSS) has biased composition (low complexity).

Belongs to the NPR3 family.

The protein is Nitrogen permease regulator 3-like protein of Schizosaccharomyces pombe (strain 972 / ATCC 24843) (Fission yeast).